The primary structure comprises 146 residues: Mediator of RNA polymerase II transcription subunit 10 (146 aa).

Belongs to the Mediator complex subunit 10 family. As to quaternary structure, component of the Mediator complex.

The protein localises to the nucleus. In terms of biological role, component of the Mediator complex, a coactivator involved in the regulated transcription of nearly all RNA polymerase II-dependent genes. Mediator functions as a bridge to convey information from gene-specific regulatory proteins to the basal RNA polymerase II transcription machinery. Mediator is recruited to promoters by direct interactions with regulatory proteins and serves as a scaffold for the assembly of a functional preinitiation complex with RNA polymerase II and the general transcription factors. The chain is Mediator of RNA polymerase II transcription subunit 10 (NUT2) from Scheffersomyces stipitis (strain ATCC 58785 / CBS 6054 / NBRC 10063 / NRRL Y-11545) (Yeast).